Reading from the N-terminus, the 381-residue chain is Chaperone protein DnaJ (381 aa).

The region spanning 5–69 (DYYEVLGVSK…EKRARYDRFG (65 aa)) is the J domain. The CR-type zinc-finger motif lies at 136–218 (GKETEIEVPH…CGGTGHVKKR (83 aa)). Residues cysteine 149, cysteine 152, cysteine 166, cysteine 169, cysteine 192, cysteine 195, cysteine 206, and cysteine 209 each coordinate Zn(2+). 4 CXXCXGXG motif repeats span residues 149-156 (CDTCHGSG), 166-173 (CPHCHGSG), 192-199 (CPVCGGTG), and 206-213 (CPTCGGTG). The tract at residues 154-174 (GSGAKPGTSPQSCPHCHGSGQ) is disordered.

This sequence belongs to the DnaJ family. As to quaternary structure, homodimer. It depends on Zn(2+) as a cofactor.

The protein resides in the cytoplasm. Participates actively in the response to hyperosmotic and heat shock by preventing the aggregation of stress-denatured proteins and by disaggregating proteins, also in an autonomous, DnaK-independent fashion. Unfolded proteins bind initially to DnaJ; upon interaction with the DnaJ-bound protein, DnaK hydrolyzes its bound ATP, resulting in the formation of a stable complex. GrpE releases ADP from DnaK; ATP binding to DnaK triggers the release of the substrate protein, thus completing the reaction cycle. Several rounds of ATP-dependent interactions between DnaJ, DnaK and GrpE are required for fully efficient folding. Also involved, together with DnaK and GrpE, in the DNA replication of plasmids through activation of initiation proteins. This is Chaperone protein DnaJ from Geobacillus thermodenitrificans (strain NG80-2).